We begin with the raw amino-acid sequence, 430 residues long: Probable histidine--tRNA ligase, cytoplasmic (430 aa).

The protein belongs to the class-II aminoacyl-tRNA synthetase family.

Its subcellular location is the cytoplasm. The catalysed reaction is tRNA(His) + L-histidine + ATP = L-histidyl-tRNA(His) + AMP + diphosphate + H(+). In Vairimorpha ceranae (strain BRL01) (Microsporidian parasite), this protein is Probable histidine--tRNA ligase, cytoplasmic.